Consider the following 273-residue polypeptide: ATP synthase subunit a (273 aa).

A run of 7 helical transmembrane segments spans residues 41-61 (ILNIDSIFFTLLLGIIFLLIF), 101-121 (LIAPLALTIFIWIFLMNLMDL), 122-142 (LAVDMLPYIAMYILHIPALRV), 143-163 (VPSADINITLSLALGVFILII), 183-203 (PFNHLIFIPLNFILESVSLLS), 221-241 (LVFILIAGLLPWWSQWIISVP), and 247-267 (IIVITLQAFIFMVLTVVYIAM).

The protein belongs to the ATPase A chain family. F-type ATPases have 2 components, CF(1) - the catalytic core - and CF(0) - the membrane proton channel. CF(1) has five subunits: alpha(3), beta(3), gamma(1), delta(1), epsilon(1). CF(0) has three main subunits: a(1), b(2) and c(9-12). The alpha and beta chains form an alternating ring which encloses part of the gamma chain. CF(1) is attached to CF(0) by a central stalk formed by the gamma and epsilon chains, while a peripheral stalk is formed by the delta and b chains.

The protein resides in the cell membrane. Key component of the proton channel; it plays a direct role in the translocation of protons across the membrane. In Baumannia cicadellinicola subsp. Homalodisca coagulata, this protein is ATP synthase subunit a.